The primary structure comprises 349 residues: UDP-N-acetylenolpyruvoylglucosamine reductase (349 aa).

Residues 26–197 (FDARARVAAR…VAVTFRLPKA (172 aa)) form the FAD-binding PCMH-type domain. Arg173 is an active-site residue. Residue Ser249 is the Proton donor of the active site. Residue Glu345 is part of the active site.

Belongs to the MurB family. The cofactor is FAD.

Its subcellular location is the cytoplasm. It carries out the reaction UDP-N-acetyl-alpha-D-muramate + NADP(+) = UDP-N-acetyl-3-O-(1-carboxyvinyl)-alpha-D-glucosamine + NADPH + H(+). It functions in the pathway cell wall biogenesis; peptidoglycan biosynthesis. Cell wall formation. This Burkholderia pseudomallei (strain K96243) protein is UDP-N-acetylenolpyruvoylglucosamine reductase.